The primary structure comprises 480 residues: Aspartyl/glutamyl-tRNA(Asn/Gln) amidotransferase subunit B (480 aa).

This sequence belongs to the GatB/GatE family. GatB subfamily. In terms of assembly, heterotrimer of A, B and C subunits.

The catalysed reaction is L-glutamyl-tRNA(Gln) + L-glutamine + ATP + H2O = L-glutaminyl-tRNA(Gln) + L-glutamate + ADP + phosphate + H(+). It catalyses the reaction L-aspartyl-tRNA(Asn) + L-glutamine + ATP + H2O = L-asparaginyl-tRNA(Asn) + L-glutamate + ADP + phosphate + 2 H(+). Its function is as follows. Allows the formation of correctly charged Asn-tRNA(Asn) or Gln-tRNA(Gln) through the transamidation of misacylated Asp-tRNA(Asn) or Glu-tRNA(Gln) in organisms which lack either or both of asparaginyl-tRNA or glutaminyl-tRNA synthetases. The reaction takes place in the presence of glutamine and ATP through an activated phospho-Asp-tRNA(Asn) or phospho-Glu-tRNA(Gln). The sequence is that of Aspartyl/glutamyl-tRNA(Asn/Gln) amidotransferase subunit B from Streptococcus pneumoniae (strain P1031).